Here is a 72-residue protein sequence, read N- to C-terminus: UPF0352 protein swp_2271 (72 aa).

This sequence belongs to the UPF0352 family.

This is UPF0352 protein swp_2271 from Shewanella piezotolerans (strain WP3 / JCM 13877).